The following is a 156-amino-acid chain: Ribosomal RNA large subunit methyltransferase H (156 aa).

S-adenosyl-L-methionine contacts are provided by residues Leu-73, Gly-104, and 123-128 (LSDLTL).

It belongs to the RNA methyltransferase RlmH family. In terms of assembly, homodimer.

It is found in the cytoplasm. It catalyses the reaction pseudouridine(1915) in 23S rRNA + S-adenosyl-L-methionine = N(3)-methylpseudouridine(1915) in 23S rRNA + S-adenosyl-L-homocysteine + H(+). Specifically methylates the pseudouridine at position 1915 (m3Psi1915) in 23S rRNA. In Leptothrix cholodnii (strain ATCC 51168 / LMG 8142 / SP-6) (Leptothrix discophora (strain SP-6)), this protein is Ribosomal RNA large subunit methyltransferase H.